A 68-amino-acid chain; its full sequence is MVYYPELSVWVSQEPFPNKDMEGRLPKGRLPVPKEVNRKKNDETNAASLTPLGSSELRSPRISYLHSF.

Positions 21–54 (MEGRLPKGRLPVPKEVNRKKNDETNAASLTPLGS) are disordered. A compositionally biased stretch (polar residues) spans 44–54 (TNAASLTPLGS).

In terms of assembly, interacts with the latency-associated peptides (LAP) of TGFB1 and TGFB2; the interaction results in a decrease in TGFB autoinduction. Interacts with FLNA. In terms of processing, phosphorylated on Ser-59. Phosphorylation decreases stability and activity.

The protein localises to the cytoplasm. In terms of biological role, may have roles in neural function and cellular differentiation. Ectopic expression promotes axonal regeneration, induces differentiation of fibroblast into myofibroblast, induces myofibroblast ameboid migration, augments motility of gliomas, and increases retinoic-acid regulation of lipid-droplet biogenesis. Down-regulates the expression of TGFB1 and TGFB2 but not of TGFB3. May play a role in the regulation of alveolar generation. The protein is Neuronal regeneration-related protein (NREP) of Pongo abelii (Sumatran orangutan).